A 158-amino-acid polypeptide reads, in one-letter code: Sec-independent protein translocase protein TatB (158 aa).

A helical membrane pass occupies residues 2-22; the sequence is FDGIGFMELLLIGVLGLVVLG. A disordered region spans residues 86–158; that stretch reads LKQAAQSVNR…DTSSNPKANG (73 aa). Composition is skewed to polar residues over residues 88-107, 113-136, and 143-158; these read QAAQ…SQGT, QIHS…QHLT, and EPSQ…KANG.

The protein belongs to the TatB family. In terms of assembly, the Tat system comprises two distinct complexes: a TatABC complex, containing multiple copies of TatA, TatB and TatC subunits, and a separate TatA complex, containing only TatA subunits. Substrates initially bind to the TatABC complex, which probably triggers association of the separate TatA complex to form the active translocon.

The protein resides in the cell inner membrane. In terms of biological role, part of the twin-arginine translocation (Tat) system that transports large folded proteins containing a characteristic twin-arginine motif in their signal peptide across membranes. Together with TatC, TatB is part of a receptor directly interacting with Tat signal peptides. TatB may form an oligomeric binding site that transiently accommodates folded Tat precursor proteins before their translocation. This Shewanella putrefaciens (strain CN-32 / ATCC BAA-453) protein is Sec-independent protein translocase protein TatB.